Consider the following 216-residue polypeptide: Adenylate kinase (216 aa).

G10–T15 provides a ligand contact to ATP. The interval S30 to V59 is NMP. AMP-binding positions include T31, R36, A57 to V59, G85 to R88, and Q92. The interval G126 to D163 is LID. Residue R127 participates in ATP binding. Residues C130 and C133 each coordinate Zn(2+). T136–Y137 is an ATP binding site. Zn(2+) is bound by residues C150 and C153. The AMP site is built by R160 and R171. Q199 serves as a coordination point for ATP.

This sequence belongs to the adenylate kinase family. In terms of assembly, monomer.

Its subcellular location is the cytoplasm. It carries out the reaction AMP + ATP = 2 ADP. Its pathway is purine metabolism; AMP biosynthesis via salvage pathway; AMP from ADP: step 1/1. Its function is as follows. Catalyzes the reversible transfer of the terminal phosphate group between ATP and AMP. Plays an important role in cellular energy homeostasis and in adenine nucleotide metabolism. This is Adenylate kinase from Bacillus anthracis (strain A0248).